The sequence spans 298 residues: Probable endonuclease 4 (298 aa).

Histidine 69, histidine 111, glutamate 146, aspartate 180, histidine 183, histidine 215, aspartate 228, histidine 230, and glutamate 260 together coordinate Zn(2+).

This sequence belongs to the AP endonuclease 2 family. The cofactor is Zn(2+).

It carries out the reaction Endonucleolytic cleavage to 5'-phosphooligonucleotide end-products.. Functionally, endonuclease IV plays a role in DNA repair. It cleaves phosphodiester bonds at apurinic or apyrimidinic (AP) sites, generating a 3'-hydroxyl group and a 5'-terminal sugar phosphate. This Bacillus cereus (strain AH187) protein is Probable endonuclease 4.